We begin with the raw amino-acid sequence, 333 residues long: uncharacterized protein (333 aa).

It to bacterial alkanal monooxygenase alpha and beta chains.

This is an uncharacterized protein from Bacillus subtilis (strain 168).